The sequence spans 1020 residues: Valine--tRNA ligase (1020 aa).

Residues 45–55 (PNVTGALHVGH) carry the 'HIGH' region motif. The 'KMSKS' region signature appears at 661 to 665 (KMSKT). Residue lysine 664 coordinates ATP. A coiled-coil region spans residues 955–1020 (AEKDRLEKAK…EALARLAELG (66 aa)).

It belongs to the class-I aminoacyl-tRNA synthetase family. ValS type 1 subfamily. Monomer.

The protein resides in the cytoplasm. It carries out the reaction tRNA(Val) + L-valine + ATP = L-valyl-tRNA(Val) + AMP + diphosphate. Catalyzes the attachment of valine to tRNA(Val). As ValRS can inadvertently accommodate and process structurally similar amino acids such as threonine, to avoid such errors, it has a 'posttransfer' editing activity that hydrolyzes mischarged Thr-tRNA(Val) in a tRNA-dependent manner. The polypeptide is Valine--tRNA ligase (Ruegeria pomeroyi (strain ATCC 700808 / DSM 15171 / DSS-3) (Silicibacter pomeroyi)).